A 1099-amino-acid chain; its full sequence is Sodium/potassium/calcium exchanger 1 (1099 aa).

The Extracellular segment spans residues 1–452 (MGKLIRMGPQ…DLFSVEERRQ (452 aa)). Residues 123 to 134 (PTTTKNNYSPTA) show a composition bias toward polar residues. 3 disordered regions span residues 123–150 (PTTTKNNYSPTAAGTERRKEDTPTSSRT), 169–199 (TPRGEMKSYSPTQVREKVKYTPSPRGRRVGT), and 284–304 (PRRVESNSSAHPWGLVGKSNP). Asn-290 carries an N-linked (GlcNAc...) asparagine glycan. The helical transmembrane segment at 453-473 (GWVVLHVFGMMYVFVALAIVC) threads the bilayer. Over 474 to 497 (DEYFVPALGVITDKLQISEDVAGA) the chain is Cytoplasmic. One copy of the Alpha-1 repeat lies at 494 to 534 (VAGATFMAAGGSAPELFTSLIGVFISHSNVGIGTIVGSAVF). The chain crosses the membrane as a helical span at residues 498 to 518 (TFMAAGGSAPELFTSLIGVFI). At 519 to 522 (SHSN) the chain is on the extracellular side. A helical membrane pass occupies residues 523–543 (VGIGTIVGSAVFNILFVIGTC). The Cytoplasmic segment spans residues 544 to 563 (SLFSREILNLTWWPLFRDVS). The helical transmembrane segment at 564–584 (FYILDLIMLILFFLDSLIAWW) threads the bilayer. A topological domain (extracellular) is located at residue Glu-585. The chain crosses the membrane as a helical span at residues 586-606 (SLLLLLAYAFYVFTMKWNKHI). Topologically, residues 607-907 (EVWVKEQLSR…SLDWPETRQK (301 aa)) are cytoplasmic. Position 658 is a phosphoserine (Ser-658). The disordered stretch occupies residues 690 to 901 (EKEEESLNQG…GNEEPLSLDW (212 aa)). Thr-724 is modified (phosphothreonine). Residues 757 to 769 (PGEEGETAGEGET) are compositionally biased toward acidic residues. 2 stretches are compositionally biased toward basic and acidic residues: residues 813–825 (EIHAEDGEMKGNE) and 835–849 (AENHGEAKNDEKGVE). Acidic residues predominate over residues 857 to 892 (GDSEEEEEEEEEQEEEEEEEEQEEEEEEEEEEEEKG). Residues 908-928 (QAIYLFLLPIVFPLWLTVPDV) form a helical membrane-spanning segment. Topologically, residues 929–935 (RRQESRK) are extracellular. The helical transmembrane segment at 936-956 (FFVFTFLGSIMWIAMFSYLMV) threads the bilayer. Over 957–971 (WWAHQVGETIGISEE) the chain is Cytoplasmic. A helical membrane pass occupies residues 972–992 (IMGLTILAAGTSIPDLITSVI). Residues 979–1010 (AAGTSIPDLITSVIVARKGLGDMAVSSSVGSN) form an Alpha-2 repeat. Topologically, residues 993 to 1010 (VARKGLGDMAVSSSVGSN) are extracellular. Residues 1011-1031 (IFDITVGLPVPWLLFSLINGL) traverse the membrane as a helical segment. At 1032 to 1039 (QPVPVSSN) the chain is on the cytoplasmic side. A helical transmembrane segment spans residues 1040 to 1060 (GLFCAIVLLFLMLLFVISSIA). The Extracellular portion of the chain corresponds to 1061 to 1068 (SCKWRMNK). A helical transmembrane segment spans residues 1069 to 1089 (ILGFTMFLLYFVFLIISVMLE). At 1090-1099 (DRIISCPVSV) the chain is on the cytoplasmic side.

It belongs to the Ca(2+):cation antiporter (CaCA) (TC 2.A.19) family. SLC24A subfamily. Post-translationally, the uncleaved signal sequence is required for efficient membrane targeting and proper membrane integration. Expressed in the retina, particularly in the inner segment, outer and inner nuclear layers, and ganglion cell layer.

It localises to the cell membrane. It catalyses the reaction Ca(2+)(out) + K(+)(out) + 4 Na(+)(in) = Ca(2+)(in) + K(+)(in) + 4 Na(+)(out). Calcium, potassium:sodium antiporter that transports 1 Ca(2+) and 1 K(+) in exchange for 4 Na(+). Critical component of the visual transduction cascade, controlling the calcium concentration of outer segments during light and darkness. Light causes a rapid lowering of cytosolic free calcium in the outer segment of both retinal rod and cone photoreceptors and the light-induced lowering of calcium is caused by extrusion via this protein which plays a key role in the process of light adaptation. This chain is Sodium/potassium/calcium exchanger 1, found in Homo sapiens (Human).